The following is a 300-amino-acid chain: Solute carrier family 25 member 35 (300 aa).

3 Solcar repeats span residues 1–90 (MDFL…AESR), 100–193 (HSPV…IKDL), and 203–294 (QSWK…LRSF). 6 consecutive transmembrane segments (helical) span residues 38 to 58 (TYQR…KVDG), 59 to 79 (LAAL…MNGI), 91 to 119 (GYLH…GAYL), 169 to 190 (AVGG…FSSI), 205 to 225 (WKVA…AMTP), and 277 to 300 (LGPH…TYAK).

It belongs to the mitochondrial carrier (TC 2.A.29) family.

It is found in the mitochondrion inner membrane. It carries out the reaction a dicarboxylate(in) + sulfate(out) = a dicarboxylate(out) + sulfate(in). Putative antiporter that exchanges dicarboxylates and sulfur oxoanions across the inner membrane of mitochondria. The polypeptide is Solute carrier family 25 member 35 (Slc25a35) (Mus musculus (Mouse)).